Here is a 177-residue protein sequence, read N- to C-terminus: Peroxiredoxin-2 (177 aa).

The residue at position 2 (alanine 2) is an N-acetylalanine. Residues 6–164 (ARIGKPAPDF…ALRLVQAFQY (159 aa)) enclose the Thioredoxin domain. Catalysis depends on cysteine 51, which acts as the Cysteine sulfenic acid (-SOH) intermediate. Serine 112 carries the phosphoserine modification.

Belongs to the peroxiredoxin family. AhpC/Prx1 subfamily. As to quaternary structure, homodimer; disulfide-linked, upon oxidation. 5 homodimers assemble to form a ring-like decamer. Interacts with TIPIN. In terms of processing, the enzyme can be inactivated by further oxidation of the cysteine sulfenic acid (C(P)-SOH) to sulphinic acid (C(P)-SO2H) instead of its condensation to a disulfide bond. It can be reactivated by forming a transient disulfide bond with sulfiredoxin SRXN1, which reduces the cysteine sulfinic acid in an ATP- and Mg-dependent manner. Acetylation increases resistance to transition to high molecular-mass complexes. Deacetylated by HDAC6 which decreases reducing activity.

It localises to the cytoplasm. The catalysed reaction is a hydroperoxide + [thioredoxin]-dithiol = an alcohol + [thioredoxin]-disulfide + H2O. Functionally, thiol-specific peroxidase that catalyzes the reduction of hydrogen peroxide and organic hydroperoxides to water and alcohols, respectively. Plays a role in cell protection against oxidative stress by detoxifying peroxides and as sensor of hydrogen peroxide-mediated signaling events. Might participate in the signaling cascades of growth factors and tumor necrosis factor-alpha by regulating the intracellular concentrations of H(2)O(2). The sequence is that of Peroxiredoxin-2 (PRDX2) from Pongo abelii (Sumatran orangutan).